A 270-amino-acid chain; its full sequence is BPI fold-containing family A member 5 (270 aa).

Positions 1-19 (MFLAGSFIVLCGLLAQSTA) are cleaved as a signal peptide. An intrachain disulfide couples cysteine 196 to cysteine 238.

The protein belongs to the BPI/LBP/Plunc superfamily. Plunc family. In terms of tissue distribution, expressed in interpapillar epithelium of the anterior part of the tongue.

The protein resides in the secreted. Functionally, may play a role in innate immunity in the oral cavity. This chain is BPI fold-containing family A member 5 (Bpifa5), found in Mus musculus (Mouse).